Here is a 127-residue protein sequence, read N- to C-terminus: Mating pheromone 4 (127 aa).

Positions 1–16 (MKAIFIILAILMVTQA) are cleaved as a signal peptide. A propeptide spanning residues 17–42 (FKMTSKVKSMNMSRNMSKNTSTLGTK) is cleaved from the precursor.

It is found in the secreted. Functionally, mating ciliate pheromones (or gamones) are diffusible extracellular communication signals that distinguish different intraspecific classes of cells commonly referred to as 'mating types'. They prepare the latter for conjugation by changing their cell surface properties. This is Mating pheromone 4 (PHR4) from Euplotoides octocarinatus (Freshwater ciliate).